We begin with the raw amino-acid sequence, 317 residues long: Non-structural protein 2 (317 aa).

ATP is bound by residues serine 107 to arginine 109, lysine 188, and histidine 221 to lysine 223. The interval leucine 205–valine 241 is RNA-binding. Histidine 225 acts as the For NTPase and RTPase activities in catalysis. Residue arginine 227 participates in ATP binding.

The protein belongs to the rotavirus NSP2 family. In terms of assembly, homooctamer. Interacts with VP1; this interaction is weak. Interacts with NSP5; this interaction leads to up-regulation of NSP5 phosphorylation and formation of viral factories. Interacts with host DCP1A, DCP1B, DDX6, EDC4 and EIF2S1/eIF2-alpha; these interactions are probably part of the sequestration of some host SGs and PBs proteins in viral factories. It depends on Mg(2+) as a cofactor.

It localises to the host cytoplasm. Its function is as follows. Participates in replication and packaging of the viral genome. Plays a crucial role, together with NSP5, in the formation of virus factories (viroplasms), which are large inclusions in the host cytoplasm where replication intermediates are assembled and viral RNA replication takes place. Displays ssRNA binding, NTPase, RNA triphosphatase (RTPase) and ATP-independent helix-unwinding activities. The unwinding activity may prepare and organize plus-strand RNAs for packaging and replication by removing interfering secondary structures. The RTPase activity plays a role in the removal of the gamma-phosphate from the rotavirus RNA minus strands of dsRNA genome segments. Participates in the selective exclusion of host proteins from stress granules (SG) and P bodies (PB). Also participates in the sequestration of these remodeled organelles in viral factories. In Rotavirus A (strain RVA/Human/United States/DS-1/1976/G2P1B[4]) (RV-A), this protein is Non-structural protein 2.